Consider the following 589-residue polypeptide: 5'-AMP-activated protein kinase catalytic subunit alpha-1 (589 aa).

In terms of domain architecture, Protein kinase spans 24-276; sequence FVIKETIGKG…VKRIVNHSWF (253 aa). Residues 30-38 and Lys53 contribute to the ATP site; that span reads IGKGAFGAV. Asp147 (proton acceptor) is an active-site residue.

This sequence belongs to the protein kinase superfamily. CAMK Ser/Thr protein kinase family. SNF1 subfamily.

The enzyme catalyses L-seryl-[protein] + ATP = O-phospho-L-seryl-[protein] + ADP + H(+). It carries out the reaction L-threonyl-[protein] + ATP = O-phospho-L-threonyl-[protein] + ADP + H(+). Probably does not act as a sensor that couples lifespan to information about energy levels and insulin-like signals. Together with aak-2, involved in the establishment of germline stem cell (GSC) quiescence during dauer development. Plays a role in the maintenance of glycogen stores which are necessary for resistance to hyperosmotic stress. The chain is 5'-AMP-activated protein kinase catalytic subunit alpha-1 (aak-1) from Caenorhabditis elegans.